Consider the following 168-residue polypeptide: Cell division inhibitor SulA (168 aa).

Residues 106–112 form a ftsZ binding region; that stretch reads ALQTGNY. Positions 161-168 are lon protease binding; that stretch reads KIHSSLYH.

This sequence belongs to the SulA family. As to quaternary structure, interacts with FtsZ. In terms of processing, is rapidly cleaved and degraded by the Lon protease once DNA damage is repaired.

Component of the SOS system and an inhibitor of cell division. Accumulation of SulA causes rapid cessation of cell division and the appearance of long, non-septate filaments. In the presence of GTP, binds a polymerization-competent form of FtsZ in a 1:1 ratio, thus inhibiting FtsZ polymerization and therefore preventing it from participating in the assembly of the Z ring. This mechanism prevents the premature segregation of damaged DNA to daughter cells during cell division. This chain is Cell division inhibitor SulA, found in Serratia marcescens.